We begin with the raw amino-acid sequence, 514 residues long: Cytochrome P450 87A3 (514 aa).

Transmembrane regions (helical) follow at residues 36–56 and 315–335; these read ASSMAYIALLCAALAAVVALL and LMFVLLFASFETTALALTIGV. Cys463 contacts heme.

The protein belongs to the cytochrome P450 family. Heme is required as a cofactor. In terms of tissue distribution, expressed in roots and coleoptiles, but not in leaves.

The protein resides in the cytoplasmic vesicle membrane. The protein is Cytochrome P450 87A3 (CYP87A3) of Oryza sativa subsp. japonica (Rice).